The sequence spans 520 residues: MRTFKSLMISLCMGTTLCMCLPQTTTAQTVSSGDSWTWDKGTIVIDTPERPTGQKSVLGLTTPKMEVVRVGFVGLGMRGPGAVERFTYIPGTQIVALCDYEASRAEKCQDILKKASMPKAAIYSGEKGYEELCKRTDIDLVYIAADWLHHFPVAKCALENGKNVAIEVPSAMNLQECWDLINLSEKTRKHCMILENCCYDWFEMNTLNMAQQGVFGEVIRAQGAYIHNLSPFWDHYWKNGKEDKLGWRLDYNMKHRGDVYATHGLGPVAQALDIHRGDRITTLVAMDTKSVVGKDLVEKRTGEECKEFRNGDHTTTLLRTANGKVIEIQHNVMTPQPYNRLYQLTGSKGFANKYPVEGYALDAAQLTASGVQPKVDDLNSHGFLPQAEMEALVEKYQHPILKKYGEMAKEVGGHGGMDFIMDSRLVYCLQNGLPLDMDVYDLAEWCCLAELGAISMDNGCAAVAFPDFTRGEWNVTKGYKHAYASPEDENANMEKAKAFTAKLKEQGAKEWAKEAKKKKK.

Residues 1-27 (MRTFKSLMISLCMGTTLCMCLPQTTTA) form the signal peptide. Residues 77 to 78 (MR), Asp-99, 147 to 150 (WLHH), 167 to 168 (EV), and Asn-196 each bind NAD(+). Substrate is bound by residues Tyr-225, Arg-248, 260 to 263 (YATH), and Tyr-338. Tyr-260 serves as a coordination point for NAD(+).

Belongs to the Gfo/Idh/MocA family. Glycosyl hydrolase 109 subfamily. The cofactor is NAD(+).

In terms of biological role, glycosidase. This is Glycosyl hydrolase family 109 protein 5 from Phocaeicola vulgatus (strain ATCC 8482 / DSM 1447 / JCM 5826 / CCUG 4940 / NBRC 14291 / NCTC 11154) (Bacteroides vulgatus).